The chain runs to 65 residues: Small ribosomal subunit protein eS17 (65 aa).

Belongs to the eukaryotic ribosomal protein eS17 family.

This chain is Small ribosomal subunit protein eS17, found in Methanocella arvoryzae (strain DSM 22066 / NBRC 105507 / MRE50).